The sequence spans 89 residues: Small ribosomal subunit protein bS20 (89 aa).

It belongs to the bacterial ribosomal protein bS20 family.

Functionally, binds directly to 16S ribosomal RNA. This is Small ribosomal subunit protein bS20 from Wolbachia pipientis subsp. Culex pipiens (strain wPip).